The chain runs to 681 residues: Phenylalanine--tRNA ligase beta subunit (681 aa).

A B5 domain is found at 288–363 (PARETVLLRP…RIHGYDQIPE (76 aa)). Mg(2+) is bound by residues D341, D347, E350, and E351. In terms of domain architecture, FDX-ACB spans 586-681 (SSFPSIQRDL…EKQLEAVLLR (96 aa)).

Belongs to the phenylalanyl-tRNA synthetase beta subunit family. Type 1 subfamily. In terms of assembly, tetramer of two alpha and two beta subunits. Requires Mg(2+) as cofactor.

Its subcellular location is the cytoplasm. It carries out the reaction tRNA(Phe) + L-phenylalanine + ATP = L-phenylalanyl-tRNA(Phe) + AMP + diphosphate + H(+). The chain is Phenylalanine--tRNA ligase beta subunit from Rhodopirellula baltica (strain DSM 10527 / NCIMB 13988 / SH1).